The following is a 46-amino-acid chain: Large ribosomal subunit protein bL34 (46 aa).

This sequence belongs to the bacterial ribosomal protein bL34 family.

In Trichodesmium erythraeum (strain IMS101), this protein is Large ribosomal subunit protein bL34.